The sequence spans 227 residues: Cytochrome c oxidase subunit 2 (227 aa).

At 1–14 (MAYPLQLGFQDAVS) the chain is on the mitochondrial intermembrane side. Residues 15-45 (PIMEELLYFHDHTLMIVFLISSLVLYIITLM) traverse the membrane as a helical segment. At 46-59 (LTTKLTHTNTMNAQ) the chain is on the mitochondrial matrix side. A helical membrane pass occupies residues 60-87 (EVETVWTILPAIILILIALPSLRILYMM). Over 88 to 227 (DEINNPSLTV…TFEKWTASLL (140 aa)) the chain is Mitochondrial intermembrane. 6 residues coordinate Cu cation: His-161, Cys-196, Glu-198, Cys-200, His-204, and Met-207. Glu-198 is a binding site for Mg(2+).

This sequence belongs to the cytochrome c oxidase subunit 2 family. Component of the cytochrome c oxidase (complex IV, CIV), a multisubunit enzyme composed of 14 subunits. The complex is composed of a catalytic core of 3 subunits MT-CO1, MT-CO2 and MT-CO3, encoded in the mitochondrial DNA, and 11 supernumerary subunits COX4I, COX5A, COX5B, COX6A, COX6B, COX6C, COX7A, COX7B, COX7C, COX8 and NDUFA4, which are encoded in the nuclear genome. The complex exists as a monomer or a dimer and forms supercomplexes (SCs) in the inner mitochondrial membrane with NADH-ubiquinone oxidoreductase (complex I, CI) and ubiquinol-cytochrome c oxidoreductase (cytochrome b-c1 complex, complex III, CIII), resulting in different assemblies (supercomplex SCI(1)III(2)IV(1) and megacomplex MCI(2)III(2)IV(2)). Found in a complex with TMEM177, COA6, COX18, COX20, SCO1 and SCO2. Interacts with TMEM177 in a COX20-dependent manner. Interacts with COX20. Interacts with COX16. It depends on Cu cation as a cofactor.

Its subcellular location is the mitochondrion inner membrane. It catalyses the reaction 4 Fe(II)-[cytochrome c] + O2 + 8 H(+)(in) = 4 Fe(III)-[cytochrome c] + 2 H2O + 4 H(+)(out). Component of the cytochrome c oxidase, the last enzyme in the mitochondrial electron transport chain which drives oxidative phosphorylation. The respiratory chain contains 3 multisubunit complexes succinate dehydrogenase (complex II, CII), ubiquinol-cytochrome c oxidoreductase (cytochrome b-c1 complex, complex III, CIII) and cytochrome c oxidase (complex IV, CIV), that cooperate to transfer electrons derived from NADH and succinate to molecular oxygen, creating an electrochemical gradient over the inner membrane that drives transmembrane transport and the ATP synthase. Cytochrome c oxidase is the component of the respiratory chain that catalyzes the reduction of oxygen to water. Electrons originating from reduced cytochrome c in the intermembrane space (IMS) are transferred via the dinuclear copper A center (CU(A)) of subunit 2 and heme A of subunit 1 to the active site in subunit 1, a binuclear center (BNC) formed by heme A3 and copper B (CU(B)). The BNC reduces molecular oxygen to 2 water molecules using 4 electrons from cytochrome c in the IMS and 4 protons from the mitochondrial matrix. The sequence is that of Cytochrome c oxidase subunit 2 (MT-CO2) from Hippopotamus amphibius (Hippopotamus).